The following is a 441-amino-acid chain: Protein translocase subunit SecY (441 aa).

Helical transmembrane passes span 18–38, 78–98, 124–144, 157–177, 180–200, 215–235, 272–292, 318–338, 382–402, and 403–423; these read ILFTLGIVILYRVGAALPSPG, AVGVMPYITASIIVQLLTVVI, IALAILQATSIVALAANGGLL, IFTLVVIVLVMTGGAALVMWM, LITERGIGNGMSLLIFVGIAA, GVVFTAVCAAALIIIVGVVFV, VIPVIFASSLIYIPHLITQLI, LVYIGIYFGLIIFFTYFYVSI, IYLGVIAVLPNLFLQIGAGGT, and VQNLPFGGTAVLIMIGVGLDT.

This sequence belongs to the SecY/SEC61-alpha family. Component of the Sec protein translocase complex. Heterotrimer consisting of SecY, SecE and SecG subunits. The heterotrimers can form oligomers, although 1 heterotrimer is thought to be able to translocate proteins. Interacts with the ribosome. Interacts with SecDF, and other proteins may be involved. Interacts with SecA.

Its subcellular location is the cell membrane. Its function is as follows. The central subunit of the protein translocation channel SecYEG. Consists of two halves formed by TMs 1-5 and 6-10. These two domains form a lateral gate at the front which open onto the bilayer between TMs 2 and 7, and are clamped together by SecE at the back. The channel is closed by both a pore ring composed of hydrophobic SecY resides and a short helix (helix 2A) on the extracellular side of the membrane which forms a plug. The plug probably moves laterally to allow the channel to open. The ring and the pore may move independently. The chain is Protein translocase subunit SecY from Mycobacterium bovis (strain ATCC BAA-935 / AF2122/97).